Consider the following 149-residue polypeptide: Ribonuclease H (149 aa).

In terms of domain architecture, RNase H type-1 spans 5-146 (QRPHVVIFTD…ADELAREGLA (142 aa)). Mg(2+)-binding residues include Asp14, Glu52, Asp74, and Asp138.

It belongs to the RNase H family. As to quaternary structure, monomer. Mg(2+) is required as a cofactor.

Its subcellular location is the cytoplasm. The enzyme catalyses Endonucleolytic cleavage to 5'-phosphomonoester.. Endonuclease that specifically degrades the RNA of RNA-DNA hybrids. This Afipia carboxidovorans (strain ATCC 49405 / DSM 1227 / KCTC 32145 / OM5) (Oligotropha carboxidovorans) protein is Ribonuclease H.